The chain runs to 354 residues: UPF0425 pyridoxal phosphate-dependent protein MMP0002 (354 aa).

At K210 the chain carries N6-(pyridoxal phosphate)lysine.

Belongs to the UPF0425 family. It depends on pyridoxal 5'-phosphate as a cofactor.

In Methanococcus maripaludis (strain DSM 14266 / JCM 13030 / NBRC 101832 / S2 / LL), this protein is UPF0425 pyridoxal phosphate-dependent protein MMP0002.